A 177-amino-acid chain; its full sequence is Sec-independent protein translocase protein TatB (177 aa).

Residues 1 to 21 traverse the membrane as a helical segment; it reads MFDFAWSEIAVIGVVALVVIG. A compositionally biased stretch (basic and acidic residues) spans 136 to 146; it reads REKTVSSETAR. Residues 136 to 177 are disordered; it reads REKTVSSETARRAATAPAFIPPGEAFRSARRAPAFIPPADQG.

This sequence belongs to the TatB family. As to quaternary structure, the Tat system comprises two distinct complexes: a TatABC complex, containing multiple copies of TatA, TatB and TatC subunits, and a separate TatA complex, containing only TatA subunits. Substrates initially bind to the TatABC complex, which probably triggers association of the separate TatA complex to form the active translocon.

It is found in the cell inner membrane. Part of the twin-arginine translocation (Tat) system that transports large folded proteins containing a characteristic twin-arginine motif in their signal peptide across membranes. Together with TatC, TatB is part of a receptor directly interacting with Tat signal peptides. TatB may form an oligomeric binding site that transiently accommodates folded Tat precursor proteins before their translocation. In Granulibacter bethesdensis (strain ATCC BAA-1260 / CGDNIH1), this protein is Sec-independent protein translocase protein TatB.